We begin with the raw amino-acid sequence, 528 residues long: Ladinin-1 (528 aa).

The disordered stretch occupies residues 1-404 (MSVSRKDWSA…NSETPLTRSA (404 aa)). A phosphoserine mark is found at serine 38, serine 56, serine 62, serine 72, and serine 76. Basic residues predominate over residues 88–97 (RTRKERRQRR). At serine 119 the chain carries Phosphoserine. Over residues 134–173 (KKVEALPRRRLSREQRGPWAQDEERLKNRELAEGEKRLPE) the composition is skewed to basic and acidic residues. SEK repeat units follow at residues 184–186 (SEK), 190–192 (SEK), 202–204 (SEK), and 208–210 (SEK). The 6 X SEK repeats stretch occupies residues 184–281 (SEKTPVSEKT…MQERKLVSEK (98 aa)). 2 stretches are compositionally biased toward basic and acidic residues: residues 218–231 (SLTEKRHSPEKLVP) and 267–279 (IVSEKMQERKLVS). SEK repeat units follow at residues 269–271 (SEK) and 279–281 (SEK). A compositionally biased stretch (polar residues) spans 304–316 (EQPQTTGGSQATT). A phosphoserine mark is found at serine 328, serine 358, serine 367, serine 405, and serine 496. The span at 365-377 (TPSPTLLTYSSSL) shows a compositional bias: low complexity. Residues 492–528 (KTQDSGDHGSQEVRKEASVTKRAQWGSKPSTSLDAEV) are disordered. Residues 495 to 510 (DSGDHGSQEVRKEASV) are compositionally biased toward basic and acidic residues. Residues 518–528 (SKPSTSLDAEV) are compositionally biased toward polar residues.

Expressed in kidney, lung and keratinocytes followed by liver, spleen and brain. Not expressed in testis, skeletal and heart muscle and in fibroblasts.

It is found in the secreted. The protein localises to the extracellular space. Its subcellular location is the extracellular matrix. It localises to the basement membrane. Its function is as follows. Anchoring filament protein which is a component of the basement membrane zone. This is Ladinin-1 (Lad1) from Mus musculus (Mouse).